A 232-amino-acid chain; its full sequence is Orotate phosphoribosyltransferase (232 aa).

5-phospho-alpha-D-ribose 1-diphosphate contacts are provided by residues arginine 107, lysine 108, lysine 111, histidine 113, and 133–141; that span reads EDLTTAGGS. An orotate-binding site is contributed by threonine 137.

The protein belongs to the purine/pyrimidine phosphoribosyltransferase family. PyrE subfamily. Homodimer. Mg(2+) serves as cofactor.

The enzyme catalyses orotidine 5'-phosphate + diphosphate = orotate + 5-phospho-alpha-D-ribose 1-diphosphate. It functions in the pathway pyrimidine metabolism; UMP biosynthesis via de novo pathway; UMP from orotate: step 1/2. Catalyzes the transfer of a ribosyl phosphate group from 5-phosphoribose 1-diphosphate to orotate, leading to the formation of orotidine monophosphate (OMP). This is Orotate phosphoribosyltransferase from Rhizobium meliloti (strain 1021) (Ensifer meliloti).